The primary structure comprises 267 residues: MNKIAIFGANGRMGRVLIEAIDQSQNATLNAAFVRASSSMMGVDVGELAGIGQRGLTVTDANSADFSQIDIVIDFTLPEALEANLALCVQQKKPVVIGTTGLNQQQKDALQRASQHIPIVFAANYSIGVNLLLNLARQTARVMGGTADIEIIEGHHRFKKDAPSGTAVAIGEVIADELGRDLSTCAVYGREGDTGERDQQTIGFATVRAGDIVGEHTALFADIGERIELTHKASSRLTFANGAVKAAVWLKNKSPGLYDMQDVLGLA.

NAD(+) is bound at residue 8-13; that stretch reads GANGRM. Arg35 provides a ligand contact to NADP(+). NAD(+) contacts are provided by residues 98 to 100 and 122 to 125; these read GTT and AANY. Residue His155 is the Proton donor/acceptor of the active site. His156 provides a ligand contact to (S)-2,3,4,5-tetrahydrodipicolinate. Lys159 functions as the Proton donor in the catalytic mechanism. (S)-2,3,4,5-tetrahydrodipicolinate is bound at residue 165 to 166; it reads GT.

This sequence belongs to the DapB family.

The protein resides in the cytoplasm. The enzyme catalyses (S)-2,3,4,5-tetrahydrodipicolinate + NAD(+) + H2O = (2S,4S)-4-hydroxy-2,3,4,5-tetrahydrodipicolinate + NADH + H(+). It carries out the reaction (S)-2,3,4,5-tetrahydrodipicolinate + NADP(+) + H2O = (2S,4S)-4-hydroxy-2,3,4,5-tetrahydrodipicolinate + NADPH + H(+). It functions in the pathway amino-acid biosynthesis; L-lysine biosynthesis via DAP pathway; (S)-tetrahydrodipicolinate from L-aspartate: step 4/4. Its function is as follows. Catalyzes the conversion of 4-hydroxy-tetrahydrodipicolinate (HTPA) to tetrahydrodipicolinate. This Pseudoalteromonas atlantica (strain T6c / ATCC BAA-1087) protein is 4-hydroxy-tetrahydrodipicolinate reductase.